The primary structure comprises 570 residues: MKMSNMLISTLREVPAEAEIDSHKLMLRAGMIRKMAAGVYNYMPLGLKVLKKVEDIIREEMNAAGAQEFLASAIIPAELWQESGRWDAYGAEMFRLKDRGDRDFCLGPTHEEVFTDIARNEIKSYKQLPLNLYQIQTKYRDERRPRFGVMRSREFVMKDAYSFDKDQGGLDLAYDKMHDAYVKIFNRCGLDAKCVAADSGAIGGSNSAEFMVKSEVGEDDVVFCSECNYAANIEKASSPAEKELKQEFKEINKVETPNTKTIDELVKFFGTNEKKFAKTILFNADGKIVAVMVRGDREINEVKVSNAIGEVINLELASSEDVKKATGAEIGFAGPIGIKVDMLLVDEEVANMYNFIVGANETGYHINNVNYGRDFEGVIGDYRNVTEGEKCPVCGGKVTIARGTEVGHIFKLGTKYSEAMNAKFIDEDGKEKPFIMGCYGIGVTRTMASIIEQHHDENGIVWPLSVAPYHVSVIPVNVKDEEQARIANEIYEKLTSAGIEALLDDRNERAGVKFKDSELMGIPMRITVGKKINDGEIEFKLRDGEMEVIKIEDVYNIIKGEFEKNKIKLK.

This sequence belongs to the class-II aminoacyl-tRNA synthetase family. ProS type 1 subfamily. As to quaternary structure, homodimer.

The protein resides in the cytoplasm. The enzyme catalyses tRNA(Pro) + L-proline + ATP = L-prolyl-tRNA(Pro) + AMP + diphosphate. Catalyzes the attachment of proline to tRNA(Pro) in a two-step reaction: proline is first activated by ATP to form Pro-AMP and then transferred to the acceptor end of tRNA(Pro). As ProRS can inadvertently accommodate and process non-cognate amino acids such as alanine and cysteine, to avoid such errors it has two additional distinct editing activities against alanine. One activity is designated as 'pretransfer' editing and involves the tRNA(Pro)-independent hydrolysis of activated Ala-AMP. The other activity is designated 'posttransfer' editing and involves deacylation of mischarged Ala-tRNA(Pro). The misacylated Cys-tRNA(Pro) is not edited by ProRS. The protein is Proline--tRNA ligase of Clostridium beijerinckii (strain ATCC 51743 / NCIMB 8052) (Clostridium acetobutylicum).